The following is a 467-amino-acid chain: Cytochrome c-552 (467 aa).

The first 27 residues, 1 to 27, serve as a signal peptide directing secretion; that stretch reads MMKKMTGKSFALSALVAASFMAAGAMA. Histidine 87 serves as a coordination point for heme c. 3 residues coordinate heme: cysteine 115, cysteine 118, and lysine 119. Residues cysteine 153, cysteine 156, histidine 157, cysteine 195, cysteine 198, and histidine 199 each coordinate heme c. The Ca(2+) site is built by glutamate 201, tyrosine 202, lysine 250, and glutamine 252. Tyrosine 202 contributes to the substrate binding site. Histidine 253 lines the substrate pocket. Positions 264, 271, 274, 275, 290, 303, 306, 307, and 382 each coordinate heme c.

This sequence belongs to the cytochrome c-552 family. The cofactor is Ca(2+). Heme c is required as a cofactor.

It localises to the periplasm. It catalyses the reaction 6 Fe(III)-[cytochrome c] + NH4(+) + 2 H2O = 6 Fe(II)-[cytochrome c] + nitrite + 8 H(+). It participates in nitrogen metabolism; nitrate reduction (assimilation). Catalyzes the reduction of nitrite to ammonia, consuming six electrons in the process. This is Cytochrome c-552 from Shewanella sp. (strain MR-4).